We begin with the raw amino-acid sequence, 273 residues long: Cytochrome b-c1 complex subunit Rieske, mitochondrial (273 aa).

The transit peptide at 1 to 61 directs the protein to the mitochondrion; the sequence is MLRVAGRRLS…PFFVASRGFS (61 aa). Positions 25 to 46 are disordered; the sequence is PLAGAGVPDRDDDSARGRSQPR. Over 62–110 the chain is Mitochondrial matrix; that stretch reads STETVVPRNQDAGLADLPATVAAVKNPNPKVVYDEYNHERYPPGDPSKR. Residues 111-133 traverse the membrane as a helical segment; sequence AFAYFVLSGGRFIYASLLRLLVL. Residues 134–273 lie on the Mitochondrial intermembrane side of the membrane; sequence KFVLSMSASK…FLEENKLLVG (140 aa). Positions 176–271 constitute a Rieske domain; it reads RRRTEDDIKL…YSFLEENKLL (96 aa). Residues cysteine 216, histidine 218, cysteine 235, and histidine 238 each coordinate [2Fe-2S] cluster. Cysteine 221 and cysteine 237 are joined by a disulfide.

Belongs to the Rieske iron-sulfur protein family. In terms of assembly, component of the ubiquinol-cytochrome c oxidoreductase (cytochrome b-c1 complex, complex III, CIII), a multisubunit enzyme composed of 3 respiratory subunits cytochrome b, cytochrome c1 and Rieske protein, 2 core protein subunits, and several low-molecular weight protein subunits. The complex exists as an obligatory dimer and forms supercomplexes (SCs) in the inner mitochondrial membrane with cytochrome c oxidase (complex IV, CIV). [2Fe-2S] cluster is required as a cofactor.

The protein localises to the mitochondrion inner membrane. The enzyme catalyses a quinol + 2 Fe(III)-[cytochrome c](out) = a quinone + 2 Fe(II)-[cytochrome c](out) + 2 H(+)(out). Functionally, component of the ubiquinol-cytochrome c oxidoreductase, a multisubunit transmembrane complex that is part of the mitochondrial electron transport chain which drives oxidative phosphorylation. The respiratory chain contains 3 multisubunit complexes succinate dehydrogenase (complex II, CII), ubiquinol-cytochrome c oxidoreductase (cytochrome b-c1 complex, complex III, CIII) and cytochrome c oxidase (complex IV, CIV), that cooperate to transfer electrons derived from NADH and succinate to molecular oxygen, creating an electrochemical gradient over the inner membrane that drives transmembrane transport and the ATP synthase. The cytochrome b-c1 complex catalyzes electron transfer from ubiquinol to cytochrome c, linking this redox reaction to translocation of protons across the mitochondrial inner membrane, with protons being carried across the membrane as hydrogens on the quinol. In the process called Q cycle, 2 protons are consumed from the matrix, 4 protons are released into the intermembrane space and 2 electrons are passed to cytochrome c. The Rieske protein is a catalytic core subunit containing a [2Fe-2S] iron-sulfur cluster. It cycles between 2 conformational states during catalysis to transfer electrons from the quinol bound in the Q(0) site in cytochrome b to cytochrome c1. The polypeptide is Cytochrome b-c1 complex subunit Rieske, mitochondrial (Zea mays (Maize)).